The primary structure comprises 439 residues: UDP-N-acetylglucosamine--N-acetylmuramyl-(pentapeptide) pyrophosphoryl-undecaprenol N-acetylglucosamine transferase (439 aa).

UDP-N-acetyl-alpha-D-glucosamine contacts are provided by residues T25 to G27, R218, S248, and Q362.

Belongs to the glycosyltransferase 28 family. MurG subfamily.

It is found in the cell membrane. The catalysed reaction is di-trans,octa-cis-undecaprenyl diphospho-N-acetyl-alpha-D-muramoyl-L-alanyl-D-glutamyl-meso-2,6-diaminopimeloyl-D-alanyl-D-alanine + UDP-N-acetyl-alpha-D-glucosamine = di-trans,octa-cis-undecaprenyl diphospho-[N-acetyl-alpha-D-glucosaminyl-(1-&gt;4)]-N-acetyl-alpha-D-muramoyl-L-alanyl-D-glutamyl-meso-2,6-diaminopimeloyl-D-alanyl-D-alanine + UDP + H(+). The protein operates within cell wall biogenesis; peptidoglycan biosynthesis. In terms of biological role, cell wall formation. Catalyzes the transfer of a GlcNAc subunit on undecaprenyl-pyrophosphoryl-MurNAc-pentapeptide (lipid intermediate I) to form undecaprenyl-pyrophosphoryl-MurNAc-(pentapeptide)GlcNAc (lipid intermediate II). The protein is UDP-N-acetylglucosamine--N-acetylmuramyl-(pentapeptide) pyrophosphoryl-undecaprenol N-acetylglucosamine transferase of Roseiflexus sp. (strain RS-1).